A 203-amino-acid chain; its full sequence is Small ribosomal subunit protein uS4 (203 aa).

Residues 93-156 form the S4 RNA-binding domain; it reads RRLDNVVYRL…MKVPAILEAV (64 aa).

It belongs to the universal ribosomal protein uS4 family. As to quaternary structure, part of the 30S ribosomal subunit. Contacts protein S5. The interaction surface between S4 and S5 is involved in control of translational fidelity.

In terms of biological role, one of the primary rRNA binding proteins, it binds directly to 16S rRNA where it nucleates assembly of the body of the 30S subunit. Functionally, with S5 and S12 plays an important role in translational accuracy. The protein is Small ribosomal subunit protein uS4 of Streptococcus uberis (strain ATCC BAA-854 / 0140J).